A 101-amino-acid polypeptide reads, in one-letter code: Large ribosomal subunit protein eL30 (101 aa).

The protein belongs to the eukaryotic ribosomal protein eL30 family.

The sequence is that of Large ribosomal subunit protein eL30 from Pyrobaculum islandicum (strain DSM 4184 / JCM 9189 / GEO3).